Consider the following 1342-residue polypeptide: DNA-directed RNA polymerase subunit beta (1342 aa).

The protein belongs to the RNA polymerase beta chain family. The RNAP catalytic core consists of 2 alpha, 1 beta, 1 beta' and 1 omega subunit. When a sigma factor is associated with the core the holoenzyme is formed, which can initiate transcription.

It catalyses the reaction RNA(n) + a ribonucleoside 5'-triphosphate = RNA(n+1) + diphosphate. Its function is as follows. DNA-dependent RNA polymerase catalyzes the transcription of DNA into RNA using the four ribonucleoside triphosphates as substrates. In Shewanella amazonensis (strain ATCC BAA-1098 / SB2B), this protein is DNA-directed RNA polymerase subunit beta.